Consider the following 307-residue polypeptide: Acetaldehyde dehydrogenase (307 aa).

Catalysis depends on Cys-131, which acts as the Acyl-thioester intermediate. Residues 162–170 (SIGPGTRKN) and Asn-273 each bind NAD(+).

It belongs to the acetaldehyde dehydrogenase family.

The enzyme catalyses acetaldehyde + NAD(+) + CoA = acetyl-CoA + NADH + H(+). The chain is Acetaldehyde dehydrogenase (nahO) from Stutzerimonas stutzeri (Pseudomonas stutzeri).